The sequence spans 329 residues: Aspartate carbamoyltransferase catalytic subunit (329 aa).

The carbamoyl phosphate site is built by Arg66 and Thr67. Residue Lys94 participates in L-aspartate binding. 3 residues coordinate carbamoyl phosphate: Arg116, His149, and Gln152. Arg189 and Arg243 together coordinate L-aspartate. The carbamoyl phosphate site is built by Gly284 and Pro285.

It belongs to the aspartate/ornithine carbamoyltransferase superfamily. ATCase family. As to quaternary structure, heterododecamer (2C3:3R2) of six catalytic PyrB chains organized as two trimers (C3), and six regulatory PyrI chains organized as three dimers (R2).

It catalyses the reaction carbamoyl phosphate + L-aspartate = N-carbamoyl-L-aspartate + phosphate + H(+). Its pathway is pyrimidine metabolism; UMP biosynthesis via de novo pathway; (S)-dihydroorotate from bicarbonate: step 2/3. Catalyzes the condensation of carbamoyl phosphate and aspartate to form carbamoyl aspartate and inorganic phosphate, the committed step in the de novo pyrimidine nucleotide biosynthesis pathway. The polypeptide is Aspartate carbamoyltransferase catalytic subunit (Gloeobacter violaceus (strain ATCC 29082 / PCC 7421)).